The chain runs to 715 residues: ATP-dependent DNA helicase Hel308 (715 aa).

The Q motif signature appears at 8–36; that stretch reads MPIEDLKLPSNVIEIIKKRGIKKLNPPQT. ATP is bound by residues glutamine 35 and 53-60; that span reads SPTGSGKT. In terms of domain architecture, Helicase ATP-binding spans 40-203; that stretch reads KKGLLEGNRL…WLGAEPVATN (164 aa). The DEAH box motif lies at 152 to 155; it reads DELH. Residues 236–442 form the Helicase C-terminal domain; it reads HGDDAIIAYT…ERAFYTFLLG (207 aa).

This sequence belongs to the helicase family. Hel308 subfamily. As to quaternary structure, monomer.

The enzyme catalyses Couples ATP hydrolysis with the unwinding of duplex DNA by translocating in the 3'-5' direction.. It carries out the reaction ATP + H2O = ADP + phosphate + H(+). DNA-dependent ATPase and 3'-5' DNA helicase that may be involved in repair of stalled replication forks. A low processivity 3'-5' helicase. Unwinds short dsDNA substrates with 3'-overhangs (25 bp dsDNA with 25 base overhang), less active on longer dsDNA substrates. Also unwinds the lagging strand of a stalled replication fork (but the leading strand was not tested). Binds ssDNA, but dsDNA about 35-fold less well. Able to displace streptavidin from biotinylated ssDNA, which is partially inhibited by DNA-binding proteins, suggesting it may play a role in stripping proteins from stalled replication forks. This is ATP-dependent DNA helicase Hel308 from Saccharolobus solfataricus (strain 98/2) (Sulfolobus solfataricus).